The following is a 231-amino-acid chain: uncharacterized protein (231 aa).

10–34 (VVTGAGSGIGEAIATLLHEEGAKVV) contacts NADP(+). Ser-140 lines the substrate pocket. The Proton acceptor role is filled by Tyr-153.

Belongs to the short-chain dehydrogenases/reductases (SDR) family.

This is an uncharacterized protein from Staphylococcus aureus (strain MW2).